Here is a 483-residue protein sequence, read N- to C-terminus: Betaine aldehyde dehydrogenase (483 aa).

K(+)-binding residues include Ile-27 and Asp-93. 149-151 is an NAD(+) binding site; the sequence is GAW. The Charge relay system role is filled by Lys-161. 175–178 contributes to the NAD(+) binding site; the sequence is KPSE. A K(+)-binding site is contributed by Val-179. 228–231 is an NAD(+) binding site; that stretch reads SVPT. Position 243 (Val-243) interacts with K(+). The active-site Proton acceptor is Glu-249. NAD(+)-binding residues include Gly-251, Cys-283, and Glu-380. Cys-283 acts as the Nucleophile in catalysis. Cys-283 is subject to Cysteine sulfenic acid (-SOH). Residues Lys-450 and Gly-453 each contribute to the K(+) site. Residue Glu-457 is the Charge relay system of the active site.

It belongs to the aldehyde dehydrogenase family. Dimer of dimers. K(+) is required as a cofactor.

The enzyme catalyses betaine aldehyde + NAD(+) + H2O = glycine betaine + NADH + 2 H(+). It functions in the pathway amine and polyamine biosynthesis; betaine biosynthesis via choline pathway; betaine from betaine aldehyde: step 1/1. Its function is as follows. Involved in the biosynthesis of the osmoprotectant glycine betaine. Catalyzes the irreversible oxidation of betaine aldehyde to the corresponding acid. This chain is Betaine aldehyde dehydrogenase, found in Cereibacter sphaeroides (strain ATCC 17025 / ATH 2.4.3) (Rhodobacter sphaeroides).